Reading from the N-terminus, the 395-residue chain is Ribosomal RNA small subunit methyltransferase H (395 aa).

Residues 101–103 (GGH), aspartate 120, tyrosine 147, aspartate 171, and glutamine 178 contribute to the S-adenosyl-L-methionine site.

This sequence belongs to the methyltransferase superfamily. RsmH family.

It is found in the cytoplasm. The catalysed reaction is cytidine(1402) in 16S rRNA + S-adenosyl-L-methionine = N(4)-methylcytidine(1402) in 16S rRNA + S-adenosyl-L-homocysteine + H(+). In terms of biological role, specifically methylates the N4 position of cytidine in position 1402 (C1402) of 16S rRNA. In Mycobacterium marinum (strain ATCC BAA-535 / M), this protein is Ribosomal RNA small subunit methyltransferase H.